Consider the following 314-residue polypeptide: Quinolinate synthase (314 aa).

Iminosuccinate is bound by residues His-27 and Ser-44. Cys-89 provides a ligand contact to [4Fe-4S] cluster. Iminosuccinate is bound by residues 115-117 (YIN) and Ser-132. Cys-175 serves as a coordination point for [4Fe-4S] cluster. Residues 201–203 (HPE) and Thr-218 contribute to the iminosuccinate site. Cys-271 lines the [4Fe-4S] cluster pocket.

The protein belongs to the quinolinate synthase family. Type 2 subfamily. [4Fe-4S] cluster is required as a cofactor.

The protein resides in the cytoplasm. The enzyme catalyses iminosuccinate + dihydroxyacetone phosphate = quinolinate + phosphate + 2 H2O + H(+). Its pathway is cofactor biosynthesis; NAD(+) biosynthesis; quinolinate from iminoaspartate: step 1/1. Its function is as follows. Catalyzes the condensation of iminoaspartate with dihydroxyacetone phosphate to form quinolinate. The chain is Quinolinate synthase from Ehrlichia chaffeensis (strain ATCC CRL-10679 / Arkansas).